Here is a 130-residue protein sequence, read N- to C-terminus: Glycine cleavage system H protein (130 aa).

In terms of domain architecture, Lipoyl-binding spans 22-103 (KAYIGISDCA…PYGSWIAAIE (82 aa)). N6-lipoyllysine is present on K63.

This sequence belongs to the GcvH family. As to quaternary structure, the glycine cleavage system is composed of four proteins: P, T, L and H. (R)-lipoate is required as a cofactor.

The glycine cleavage system catalyzes the degradation of glycine. The H protein shuttles the methylamine group of glycine from the P protein to the T protein. This is Glycine cleavage system H protein from Clostridium botulinum (strain Okra / Type B1).